Here is a 352-residue protein sequence, read N- to C-terminus: Proton-activated chloride channel (352 aa).

The interval 1-55 is disordered; that stretch reads MEAIRKELSRSYQELNEEAEPVAIDPEEAEDEEKEQEEAASAVAPDRDSDRSSPP. Residues 1–65 are Cytoplasmic-facing; that stretch reads MEAIRKELSR…VRFSRTCLKN (65 aa). Residues 15–38 are compositionally biased toward acidic residues; that stretch reads LNEEAEPVAIDPEEAEDEEKEQEE. The chain crosses the membrane as a helical span at residues 66-86; the sequence is FFSVLLILVYLLLMGVAVFLV. The Extracellular segment spans residues 87–299; it reads YQTITDFRDK…KDPYIQEIQD (213 aa). A helical transmembrane segment spans residues 300-320; the sequence is IITANPWSMIALLCSVFLVLF. The Cytoplasmic portion of the chain corresponds to 321–352; that stretch reads KAADFAKLSVKWMIKVRRRHLKKRARELNHIS.

This sequence belongs to the proton-activated chloride channel family.

The protein localises to the cell membrane. The enzyme catalyses chloride(in) = chloride(out). Its function is as follows. Chloride channel gated by pH that facilitates the entry of chloride ions into cells upon exposure to extracellular acidic pH. This Xenopus tropicalis (Western clawed frog) protein is Proton-activated chloride channel.